Reading from the N-terminus, the 280-residue chain is tRNA (guanine-N(1)-)-methyltransferase (280 aa).

Positions 71-94 (DDVSSGTASTQDLQSALPHLSKPR) are disordered. A compositionally biased stretch (polar residues) spans 74–84 (SSGTASTQDLQ). S-adenosyl-L-methionine is bound by residues Gly-146 and 170–175 (IGDYVL).

Belongs to the RNA methyltransferase TrmD family. In terms of assembly, homodimer.

Its subcellular location is the cytoplasm. The enzyme catalyses guanosine(37) in tRNA + S-adenosyl-L-methionine = N(1)-methylguanosine(37) in tRNA + S-adenosyl-L-homocysteine + H(+). Its function is as follows. Specifically methylates guanosine-37 in various tRNAs. In Corynebacterium aurimucosum (strain ATCC 700975 / DSM 44827 / CIP 107346 / CN-1) (Corynebacterium nigricans), this protein is tRNA (guanine-N(1)-)-methyltransferase.